The chain runs to 653 residues: Choline transporter-like protein 3 (653 aa).

Residues 34-54 (WLFLFFLFWTGLVFIMGYSVV) form a helical membrane-spanning segment. 2 N-linked (GlcNAc...) asparagine glycosylation sites follow: N136 and N151. A run of 5 helical transmembrane segments spans residues 213–233 (DTIL…MFTF), 243–263 (IFIS…WWLY), 284–304 (VLGF…LIFV), 334–354 (LWTF…LLSL), and 384–404 (LIGL…TIAG). N-linked (GlcNAc...) asparagine glycosylation is found at N412, N503, and N521. 2 helical membrane-spanning segments follow: residues 534–554 (FIIF…GLMA) and 563–583 (VWAV…HSFL). The tract at residues 632–653 (RAQQDKHSLRNEEGTELQAIVR) is disordered. Positions 634 to 644 (QQDKHSLRNEE) are enriched in basic and acidic residues.

It belongs to the CTL (choline transporter-like) family.

It is found in the membrane. The sequence is that of Choline transporter-like protein 3 (SLC44A3) from Homo sapiens (Human).